A 366-amino-acid polypeptide reads, in one-letter code: Agamous-like MADS-box protein AGL36 (366 aa).

Positions 1-59 constitute an MADS-box domain; that stretch reads MKKVKLSLIANERSRKTSFIKRKDGIFKKLHELSTLCGVQACALIYSPFIPVPESWPSR. Positions 86–115 form a coiled coil; it reads TYLMERITKAKEQLKNLAAENRELQVRRFM.

Interacts with AGL62.

It localises to the nucleus. Its function is as follows. Probable transcription factor. This Arabidopsis thaliana (Mouse-ear cress) protein is Agamous-like MADS-box protein AGL36 (AGL36).